Consider the following 335-residue polypeptide: Dihydroorotate dehydrogenase (quinone) (335 aa).

Residues alanine 59–lysine 63 and threonine 83 contribute to the FMN site. Lysine 63 provides a ligand contact to substrate. Residue asparagine 108 to phenylalanine 112 coordinates substrate. FMN contacts are provided by asparagine 136 and asparagine 169. Asparagine 169 lines the substrate pocket. Serine 172 (nucleophile) is an active-site residue. Asparagine 174 provides a ligand contact to substrate. Residues lysine 214 and threonine 242 each coordinate FMN. Residue asparagine 243 to threonine 244 participates in substrate binding. Residues glycine 265, glycine 294, and tyrosine 315 to serine 316 contribute to the FMN site.

The protein belongs to the dihydroorotate dehydrogenase family. Type 2 subfamily. Monomer. Requires FMN as cofactor.

It localises to the cell membrane. The catalysed reaction is (S)-dihydroorotate + a quinone = orotate + a quinol. It participates in pyrimidine metabolism; UMP biosynthesis via de novo pathway; orotate from (S)-dihydroorotate (quinone route): step 1/1. Catalyzes the conversion of dihydroorotate to orotate with quinone as electron acceptor. In Neisseria meningitidis serogroup C / serotype 2a (strain ATCC 700532 / DSM 15464 / FAM18), this protein is Dihydroorotate dehydrogenase (quinone).